Here is a 540-residue protein sequence, read N- to C-terminus: Glucose-6-phosphate isomerase (540 aa).

The active-site Proton donor is the E350. Catalysis depends on residues H381 and K503.

The protein belongs to the GPI family.

It is found in the cytoplasm. The enzyme catalyses alpha-D-glucose 6-phosphate = beta-D-fructose 6-phosphate. It functions in the pathway carbohydrate biosynthesis; gluconeogenesis. It participates in carbohydrate degradation; glycolysis; D-glyceraldehyde 3-phosphate and glycerone phosphate from D-glucose: step 2/4. Its function is as follows. Catalyzes the reversible isomerization of glucose-6-phosphate to fructose-6-phosphate. This is Glucose-6-phosphate isomerase from Burkholderia orbicola (strain MC0-3).